The chain runs to 298 residues: Aspartate carbamoyltransferase catalytic subunit (298 aa).

Residues Arg-50 and Thr-51 each coordinate carbamoyl phosphate. Lys-79 is an L-aspartate binding site. Arg-100, His-128, and Gln-131 together coordinate carbamoyl phosphate. Residues Arg-160 and Arg-221 each contribute to the L-aspartate site. Positions 260 and 261 each coordinate carbamoyl phosphate.

This sequence belongs to the aspartate/ornithine carbamoyltransferase superfamily. ATCase family. In terms of assembly, heterooligomer of catalytic and regulatory chains.

The enzyme catalyses carbamoyl phosphate + L-aspartate = N-carbamoyl-L-aspartate + phosphate + H(+). The protein operates within pyrimidine metabolism; UMP biosynthesis via de novo pathway; (S)-dihydroorotate from bicarbonate: step 2/3. Catalyzes the condensation of carbamoyl phosphate and aspartate to form carbamoyl aspartate and inorganic phosphate, the committed step in the de novo pyrimidine nucleotide biosynthesis pathway. This is Aspartate carbamoyltransferase catalytic subunit from Methanosphaerula palustris (strain ATCC BAA-1556 / DSM 19958 / E1-9c).